The primary structure comprises 1532 residues: Glycogen debranching enzyme (1532 aa).

At Ser64 the chain carries Phosphoserine. Active-site residues include Asp526, His529, and Asp627.

It belongs to the glycogen debranching enzyme family. Monomer. Interacts with NHLRC1/malin. Post-translationally, the N-terminus is blocked. Ubiquitinated. As to expression, liver, kidney and lymphoblastoid cells express predominantly isoform 1; whereas muscle and heart express not only isoform 1, but also muscle-specific isoform mRNAs (isoforms 2, 3 and 4). Isoforms 5 and 6 are present in both liver and muscle.

The protein localises to the cytoplasm. It catalyses the reaction Transfers a segment of a (1-&gt;4)-alpha-D-glucan to a new position in an acceptor, which may be glucose or a (1-&gt;4)-alpha-D-glucan.. The enzyme catalyses Hydrolysis of (1-&gt;6)-alpha-D-glucosidic branch linkages in glycogen phosphorylase limit dextrin.. Its function is as follows. Multifunctional enzyme acting as 1,4-alpha-D-glucan:1,4-alpha-D-glucan 4-alpha-D-glycosyltransferase and amylo-1,6-glucosidase in glycogen degradation. In Homo sapiens (Human), this protein is Glycogen debranching enzyme (AGL).